The following is a 271-amino-acid chain: Peroxiredoxin-4 (271 aa).

An N-terminal signal peptide occupies residues 1–37 (MEALPLLAATTPDHGRHRRLLLLPLLLFLLPAGAVQG). Residues 79–237 (AKISKPAPYW…TLRLVQAFQY (159 aa)) form the Thioredoxin domain. C124 (cysteine sulfenic acid (-SOH) intermediate) is an active-site residue.

The protein belongs to the peroxiredoxin family. AhpC/Prx1 subfamily. Homodimer; disulfide-linked, upon oxidation. 5 homodimers assemble to form a ring-like decamer. Can form heterodimers with PRDX1. In terms of processing, the enzyme can be inactivated by further oxidation of the cysteine sulfenic acid (C(P)-SOH) to sulphinic acid (C(P)-SO2H) and sulphonic acid (C(P)-SO3H) instead of its condensation to a disulfide bond.

The protein localises to the cytoplasm. It is found in the endoplasmic reticulum. It catalyses the reaction a hydroperoxide + [thioredoxin]-dithiol = an alcohol + [thioredoxin]-disulfide + H2O. Functionally, thiol-specific peroxidase that catalyzes the reduction of hydrogen peroxide and organic hydroperoxides to water and alcohols, respectively. Plays a role in cell protection against oxidative stress by detoxifying peroxides and as sensor of hydrogen peroxide-mediated signaling events. Regulates the activation of NF-kappa-B in the cytosol by a modulation of I-kappa-B-alpha phosphorylation. The sequence is that of Peroxiredoxin-4 (PRDX4) from Homo sapiens (Human).